A 68-amino-acid polypeptide reads, in one-letter code: Tabimmunregulin 1 (68 aa).

A signal peptide spans M1–A26. Residues Q27–K38 constitute a propeptide that is removed on maturation.

As to expression, expressed in salivary glands.

It is found in the secreted. Horsefly salivary gland immunosuppressant protein that likely inhibits the host inflammatory response by regulation of anti- and pro-inflammatory cytokines. When tested on mouse splenocytes in the presence of LPS, it increases the secretion of the proinflammatory cytokine interleukin-10 (IL10) and decreases the secretion of the proinflammatory cytokine interferon-gamma (IFNG) in a dose-dependent manner. The chain is Tabimmunregulin 1 from Tabanus yao (Horsefly).